Here is a 176-residue protein sequence, read N- to C-terminus: Ribosome maturation factor RimM (176 aa).

A PRC barrel domain is found at 92 to 165; that stretch reads EDEFLYSDLI…RLVVVPPVYA (74 aa).

It belongs to the RimM family. As to quaternary structure, binds ribosomal protein uS19.

It is found in the cytoplasm. An accessory protein needed during the final step in the assembly of 30S ribosomal subunit, possibly for assembly of the head region. Essential for efficient processing of 16S rRNA. May be needed both before and after RbfA during the maturation of 16S rRNA. It has affinity for free ribosomal 30S subunits but not for 70S ribosomes. The protein is Ribosome maturation factor RimM of Paramagnetospirillum magneticum (strain ATCC 700264 / AMB-1) (Magnetospirillum magneticum).